The chain runs to 125 residues: Secreted RxLR effector protein 22 (125 aa).

An N-terminal signal peptide occupies residues 1–26 (MRLIYSALVTAAAMVAISNGSTPARG). The tract at residues 21-66 (STPARGNEVETRSLRGGNEVDSSMSDDGERAARGGGRVRSQASGVT) is disordered. A RxLR-dEER motif is present at residues 32 to 50 (RSLRGGNEVDSSMSDDGER).

Belongs to the RxLR effector family.

The protein localises to the secreted. Its subcellular location is the host nucleus. Functionally, effector that acts as a broad suppressor of cell death to interrupt plant immunity. Inhibits cell death induced by cell death-inducing proteins, including the PAMP elicitor INF1 from P.infestans. The sequence is that of Secreted RxLR effector protein 22 from Plasmopara viticola (Downy mildew of grapevine).